A 291-amino-acid chain; its full sequence is ATP synthase gamma chain (291 aa).

Belongs to the ATPase gamma chain family. In terms of assembly, F-type ATPases have 2 components, CF(1) - the catalytic core - and CF(0) - the membrane proton channel. CF(1) has five subunits: alpha(3), beta(3), gamma(1), delta(1), epsilon(1). CF(0) has three main subunits: a, b and c.

The protein resides in the cell inner membrane. Functionally, produces ATP from ADP in the presence of a proton gradient across the membrane. The gamma chain is believed to be important in regulating ATPase activity and the flow of protons through the CF(0) complex. This is ATP synthase gamma chain from Methylibium petroleiphilum (strain ATCC BAA-1232 / LMG 22953 / PM1).